A 264-amino-acid chain; its full sequence is Thymidylate synthase (264 aa).

Residue Arg21 coordinates dUMP. A (6R)-5,10-methylene-5,6,7,8-tetrahydrofolate-binding site is contributed by His51. Residue 126 to 127 (RR) coordinates dUMP. Cys146 functions as the Nucleophile in the catalytic mechanism. DUMP-binding positions include 166–169 (RSAD), Asn177, and 207–209 (HLY). Residue Asp169 participates in (6R)-5,10-methylene-5,6,7,8-tetrahydrofolate binding. Ala263 is a binding site for (6R)-5,10-methylene-5,6,7,8-tetrahydrofolate.

This sequence belongs to the thymidylate synthase family. Bacterial-type ThyA subfamily. As to quaternary structure, homodimer.

Its subcellular location is the cytoplasm. The catalysed reaction is dUMP + (6R)-5,10-methylene-5,6,7,8-tetrahydrofolate = 7,8-dihydrofolate + dTMP. It functions in the pathway pyrimidine metabolism; dTTP biosynthesis. Functionally, catalyzes the reductive methylation of 2'-deoxyuridine-5'-monophosphate (dUMP) to 2'-deoxythymidine-5'-monophosphate (dTMP) while utilizing 5,10-methylenetetrahydrofolate (mTHF) as the methyl donor and reductant in the reaction, yielding dihydrofolate (DHF) as a by-product. This enzymatic reaction provides an intracellular de novo source of dTMP, an essential precursor for DNA biosynthesis. This Bartonella tribocorum (strain CIP 105476 / IBS 506) protein is Thymidylate synthase.